We begin with the raw amino-acid sequence, 499 residues long: MTGQSAAVEGSNSALPWYRMGFHTLAEFNTYVTFVLLGMSIMMVTSAVTSAPDFVTKYFIYATGDPDAVAETPLFWNNANTFYNAGTYAMQVVTEIASLTPFMRSIPLGIRLFLGLGIPFVELVVIIAVPAATIPTQNGAIAVIMVVAMMGGLSKALCDSCTNALVGPFPTKFMNGAQWGLTVIALFMSIIQIILQVSMGSTFQDVLTISRIYFGIGIGIQVMAIAALVLLRYNPFAQKYIAEFRAAALRRRGHVEPEESQDSKEPATGDVAEAPKAGEKEVTLDAMEEADEVRAVPSDAFVAKSGAVLQATGDADRMVDLDQTKNITSTEQMLRASVWSVFKRIYPMLLCAFTIFFTTLLVFPGVFFLVPARSGWYMTIIVTLFNAGDFVARVLLMIRVLRPSPKLVIVGTFGRLAVIPLIVLCVRGFIPGVALPYVLIFLFGLTNGYFGTMSCIHCPRTPTLHYAGERSVAAMLAGISLMLGLCFGSNMSLAITLTY.

Residues 1–30 (MTGQSAAVEGSNSALPWYRMGFHTLAEFNT) are Cytoplasmic-facing. 5 helical membrane passes run 31-51 (YVTF…VTSA), 112-132 (LFLG…VPAA), 133-153 (TIPT…MGGL), 179-199 (WGLT…QVSM), and 212-232 (IYFG…VLLR). The span at 255–267 (VEPEESQDSKEPA) shows a compositional bias: basic and acidic residues. The segment at 255–276 (VEPEESQDSKEPATGDVAEAPK) is disordered. A glycan (N-linked (GlcNAc...) asparagine) is linked at Asn326. Transmembrane regions (helical) follow at residues 350–370 (LCAF…FFLV), 378–398 (MTII…LLMI), 406–426 (KLVI…VLCV), 428–448 (GFIP…LTNG), and 475–495 (MLAG…SLAI).

The protein belongs to the SLC29A/ENT transporter (TC 2.A.57) family.

It is found in the cell membrane. Its subcellular location is the cell projection. The protein localises to the cilium. The protein resides in the flagellum. The catalysed reaction is inosine(in) + H(+)(in) = inosine(out) + H(+)(out). It carries out the reaction guanosine(in) + H(+)(in) = guanosine(out) + H(+)(out). It catalyses the reaction xanthosine(in) + H(+)(in) = xanthosine(out) + H(+)(out). In terms of biological role, high affinity nucleoside:H(+) symporter; transports inosine and guanosine. Can transport xanthosine. The chain is Nucleoside transporter 2 from Leishmania donovani.